A 245-amino-acid polypeptide reads, in one-letter code: MSFCYVRTISIALFLFIFLFLNNGNFKNNFYRKDNKYSSIKIRSFRSLAENQKVETEQSTPAKPEPTEFVNNDIHQNKNTFKKLKNNEKKKEILEEKMKDFVKLYVNKSSGECQRYRLQQHLKNYSSSNEYKKFMNKFVKFLKVHNDLNALKSQLHFNNVRAATIIFIAGFLSIFAILLTISAVAATSKFTNNMLAIAGVGALGSALSLPGMALLFVPAMLYVLNRKNEITNHYSERIIKQVSNF.

An N-terminal signal peptide occupies residues 1 to 25 (MSFCYVRTISIALFLFIFLFLNNGN). Residues 26 to 164 (FKNNFYRKDN…LHFNNVRAAT (139 aa)) are Cytoplasmic-facing. Residues 46–50 (RSLAE) are PEXEL motif. Residues 52–71 (QKVETEQSTPAKPEPTEFVN) are disordered. Residues 165–185 (IIFIAGFLSIFAILLTISAVA) traverse the membrane as a helical segment. Topologically, residues 186-196 (ATSKFTNNMLA) are extracellular. Residues 197-217 (IAGVGALGSALSLPGMALLFV) form a helical membrane-spanning segment. Residues 218–245 (PAMLYVLNRKNEITNHYSERIIKQVSNF) lie on the Cytoplasmic side of the membrane.

As to quaternary structure, monomer. May form (via the first cytoplasmic domain) homodimers or homotrimers; disulfide-linked. Interacts with MAHRP1. May interact (via first cytoplasmic domain) with SBP1; the interaction is likely to occur at the ring stage in the Maurer's clefts and is weaken by ATP. Interacts (via extracellular domain) with human chemokine CX3CL1; the interaction mediates the adhesion of infected erythrocytes with endothelial cells.

It is found in the host cell membrane. In terms of biological role, during the asexual blood stage and probably at the ring/trophozoite stages, plays a role in Maurer's cleft formation and/or morphology. Also, involved in the loading of the virulence factor EMP1 into the Maurer's cleft membrane. By binding to host chemokine CX3CL1, mediates the cytoadherence of host erythrocytes infected with parasite mature forms (late trophozoite and schizont) to endothelial cells, which sequesters them away from the circulation and thus prevents their elimination by the host spleen. In Plasmodium falciparum (isolate 3D7), this protein is CX3CL1-binding protein 2.